We begin with the raw amino-acid sequence, 985 residues long: Bifunctional glutamine synthetase adenylyltransferase/adenylyl-removing enzyme (985 aa).

Residues 1–460 (MSLPSLADFP…HFRQVIADPD (460 aa)) are adenylyl removase. The interval 476–985 (GGEWLPLWEE…MRIWAQMGLS (510 aa)) is adenylyl transferase.

Belongs to the GlnE family. Mg(2+) serves as cofactor.

It carries out the reaction [glutamine synthetase]-O(4)-(5'-adenylyl)-L-tyrosine + phosphate = [glutamine synthetase]-L-tyrosine + ADP. The enzyme catalyses [glutamine synthetase]-L-tyrosine + ATP = [glutamine synthetase]-O(4)-(5'-adenylyl)-L-tyrosine + diphosphate. Its function is as follows. Involved in the regulation of glutamine synthetase GlnA, a key enzyme in the process to assimilate ammonia. When cellular nitrogen levels are high, the C-terminal adenylyl transferase (AT) inactivates GlnA by covalent transfer of an adenylyl group from ATP to specific tyrosine residue of GlnA, thus reducing its activity. Conversely, when nitrogen levels are low, the N-terminal adenylyl removase (AR) activates GlnA by removing the adenylyl group by phosphorolysis, increasing its activity. The regulatory region of GlnE binds the signal transduction protein PII (GlnB) which indicates the nitrogen status of the cell. The chain is Bifunctional glutamine synthetase adenylyltransferase/adenylyl-removing enzyme from Pseudomonas syringae pv. tomato (strain ATCC BAA-871 / DC3000).